The chain runs to 830 residues: Probable glucan 1,3-beta-glucosidase D (830 aa).

A compositionally biased stretch (basic and acidic residues) spans 1 to 34; it reads MPSQSRSRDRYRGRDTEYTRRRYPDEHDYSHDDH. The segment at 1-279 is disordered; it reads MPSQSRSRDR…PPMDARWPKG (279 aa). The Cytoplasmic portion of the chain corresponds to 1–301; that stretch reads MPSQSRSRDR…GRPFWKQKKW (301 aa). Residues 35-51 are compositionally biased toward acidic residues; it reads DYDYDDDDDDNDDLEQD. Basic and acidic residues-rich tracts occupy residues 52-98 and 110-175; these read VTER…ERRR and QHRE…KHQS. The segment covering 181-194 has biased composition (low complexity); that stretch reads SASHLLSADALARL. Basic and acidic residues-rich tracts occupy residues 198 to 215, 228 to 243, and 253 to 264; these read YEKEDRRERAHAKDAAKA, EQERGLRAEKPRDRSR, and EEGRGPEMEFRR. Residues 302–322 form a helical; Signal-anchor for type II membrane protein membrane-spanning segment; the sequence is LIGIGVVILILVIVIPVAVVV. Residues 323–830 lie on the Extracellular side of the membrane; the sequence is SKKHNDKPNA…PDFGSLPEYY (508 aa). Residues 327–351 are disordered; it reads NDKPNATTTQPDGTTPSNSNLDGLS. Polar residues predominate over residues 330–348; that stretch reads PNATTTQPDGTTPSNSNLD. N-linked (GlcNAc...) asparagine glycans are attached at residues Asn331, Asn376, Asn381, Asn393, Asn546, and Asn558. Glu597 acts as the Proton donor in catalysis. Asn610, Asn636, Asn669, and Asn689 each carry an N-linked (GlcNAc...) asparagine glycan. Glu701 acts as the Nucleophile in catalysis.

It belongs to the glycosyl hydrolase 5 (cellulase A) family.

Its subcellular location is the cell membrane. It carries out the reaction Successive hydrolysis of beta-D-glucose units from the non-reducing ends of (1-&gt;3)-beta-D-glucans, releasing alpha-glucose.. Glucosidase involved in the degradation of cellulosic biomass. Active on lichenan. The chain is Probable glucan 1,3-beta-glucosidase D (exgD) from Aspergillus clavatus (strain ATCC 1007 / CBS 513.65 / DSM 816 / NCTC 3887 / NRRL 1 / QM 1276 / 107).